We begin with the raw amino-acid sequence, 444 residues long: Shufflon protein B' (444 aa).

A constant region region spans residues 1-361 (MKKYDRGWAS…TGAILSCQSG (361 aa)). The interval 362 to 444 (TWRKVGSGEL…GSITVYAICQ (83 aa)) is variable region.

This Escherichia coli protein is Shufflon protein B'.